The sequence spans 212 residues: MTDLSDIRREYTQGGLRRADLPKNPMQLFELWMTQARDAQLSDPTAMCVATVDEHGQPFQRIVLLKRFDDSGFVFFTNLGSRKALQIAANNKVSLHFPWHPIERQVSILGEAQPLSTAEVLKYFMTRPKESQIAAWVSQQSSKLSARQVLEGKFFEMKAKFAKGDVPLPSFWGGYLVKPSSIEFWQGGEHRLHDRFLYTREAQAWQIDRLAP.

Residues 8-11 and Lys-66 contribute to the substrate site; that span reads RREY. FMN-binding positions include 61 to 66, 76 to 77, Arg-82, Lys-83, and Gln-105; these read RIVLLK and FT. Residues Tyr-123, Arg-127, and Ser-131 each contribute to the substrate site. Residues 140–141 and Trp-185 each bind FMN; that span reads QS. Substrate is bound at residue 191 to 193; the sequence is RLH. Arg-195 lines the FMN pocket.

This sequence belongs to the pyridoxamine 5'-phosphate oxidase family. In terms of assembly, homodimer. The cofactor is FMN.

The catalysed reaction is pyridoxamine 5'-phosphate + O2 + H2O = pyridoxal 5'-phosphate + H2O2 + NH4(+). It carries out the reaction pyridoxine 5'-phosphate + O2 = pyridoxal 5'-phosphate + H2O2. Its pathway is cofactor metabolism; pyridoxal 5'-phosphate salvage; pyridoxal 5'-phosphate from pyridoxamine 5'-phosphate: step 1/1. It functions in the pathway cofactor metabolism; pyridoxal 5'-phosphate salvage; pyridoxal 5'-phosphate from pyridoxine 5'-phosphate: step 1/1. Functionally, catalyzes the oxidation of either pyridoxine 5'-phosphate (PNP) or pyridoxamine 5'-phosphate (PMP) into pyridoxal 5'-phosphate (PLP). This is Pyridoxine/pyridoxamine 5'-phosphate oxidase from Shewanella oneidensis (strain ATCC 700550 / JCM 31522 / CIP 106686 / LMG 19005 / NCIMB 14063 / MR-1).